A 158-amino-acid polypeptide reads, in one-letter code: Deoxyuridine 5'-triphosphate nucleotidohydrolase (158 aa).

Substrate-binding positions include 66-68 (RSG), Asn79, 83-85 (TID), and Lys93. The tract at residues 139 to 158 (RGFGSSGVARKGHYQGKPLA) is disordered.

Belongs to the dUTPase family. Mg(2+) serves as cofactor.

It carries out the reaction dUTP + H2O = dUMP + diphosphate + H(+). It functions in the pathway pyrimidine metabolism; dUMP biosynthesis; dUMP from dCTP (dUTP route): step 2/2. In terms of biological role, this enzyme is involved in nucleotide metabolism: it produces dUMP, the immediate precursor of thymidine nucleotides and it decreases the intracellular concentration of dUTP so that uracil cannot be incorporated into DNA. In Helicobacter hepaticus (strain ATCC 51449 / 3B1), this protein is Deoxyuridine 5'-triphosphate nucleotidohydrolase.